A 72-amino-acid chain; its full sequence is ADVPGNYPLNTNGNMYYCTILGENEFCRKVCKVHGVKYGYCFNSHCWCEYLEAKDVSVWNAAKNYCKNPVGK.

Residues 3 to 67 form the LCN-type CS-alpha/beta domain; that stretch reads VPGNYPLNTN…VWNAAKNYCK (65 aa). 3 cysteine pairs are disulfide-bonded: cysteine 18-cysteine 41, cysteine 27-cysteine 46, and cysteine 31-cysteine 48.

This sequence belongs to the long (3 C-C) scorpion toxin superfamily. Sodium channel inhibitor family. Beta subfamily. As to expression, expressed by the venom gland.

It is found in the secreted. Functionally, binds to sodium channels (Nav) and affects the channel activation process. This is Toxin Acra II-2 from Androctonus crassicauda (Arabian fat-tailed scorpion).